Consider the following 435-residue polypeptide: Cyclic GMP-AMP synthase-like receptor (435 aa).

Residues Ser70 and 82–84 (EFD) contribute to the ATP site. Residues Glu82, Asp84, and Asp209 each contribute to the Mg(2+) site. Asp209 lines the GTP pocket. Residues Lys286 and 300–304 (SYYVK) contribute to the ATP site. Leu311, Asp312, and Asp317 together coordinate Mn(2+).

Belongs to the mab-21 family. Mg(2+) serves as cofactor. Requires Mn(2+) as cofactor.

It catalyses the reaction GTP + ATP = 2',3'-cGAMP + 2 diphosphate. It carries out the reaction GTP + ATP = pppGp(2'-5')A + diphosphate. The enzyme catalyses pppGp(2'-5')A = 2',3'-cGAMP + diphosphate. Nucleotidyltransferase that catalyzes the formation of cyclic GMP-AMP (2',3'-cGAMP) from ATP and GTP and plays a key role in innate immunity. Directly binds some unknown ligand, activating the nucleotidyltransferase activity, leading to synthesis of 2',3'-cGAMP, a second messenger that binds to and activates Sting, thereby triggering the immune response via activation of the NF-kappa-B transcription factor. In Ctenocephalides felis (Cat flea), this protein is Cyclic GMP-AMP synthase-like receptor.